The chain runs to 382 residues: Chorismate synthase (382 aa).

The NADP(+) site is built by R39 and R45. Residues 89–113 (SPEPGGEPRKKALTDARPGHADLTG) are disordered. Basic and acidic residues predominate over residues 94–108 (GEPRKKALTDARPGH). Residues 128–130 (RAS), 246–247 (QA), A290, 305–309 (KPIAT), and R331 each bind FMN.

It belongs to the chorismate synthase family. As to quaternary structure, homotetramer. It depends on FMNH2 as a cofactor.

It catalyses the reaction 5-O-(1-carboxyvinyl)-3-phosphoshikimate = chorismate + phosphate. It functions in the pathway metabolic intermediate biosynthesis; chorismate biosynthesis; chorismate from D-erythrose 4-phosphate and phosphoenolpyruvate: step 7/7. Functionally, catalyzes the anti-1,4-elimination of the C-3 phosphate and the C-6 proR hydrogen from 5-enolpyruvylshikimate-3-phosphate (EPSP) to yield chorismate, which is the branch point compound that serves as the starting substrate for the three terminal pathways of aromatic amino acid biosynthesis. This reaction introduces a second double bond into the aromatic ring system. The protein is Chorismate synthase of Deinococcus radiodurans (strain ATCC 13939 / DSM 20539 / JCM 16871 / CCUG 27074 / LMG 4051 / NBRC 15346 / NCIMB 9279 / VKM B-1422 / R1).